The primary structure comprises 711 residues: Ferric/cupric reductase transmembrane component 2 (711 aa).

The signal sequence occupies residues 1–23; that stretch reads MHWTSILSAILLFCLSGARASPA. The Extracellular segment spans residues 24 to 164; sequence KTVIRNKVPL…GFYANLDVGN (141 aa). Residues Asn85, Asn108, Asn120, and Asn134 are each glycosylated (N-linked (GlcNAc...) asparagine). A helical transmembrane segment spans residues 165–185; the sequence is IYGGIICAYFVAIMAFAGVLH. Residues 186–235 are Cytoplasmic-facing; the sequence is CMNYTPFKTVLLKQKLVGYVRGYLTLPTIGSKHASDFSYFRIFTGYLPTR. A helical membrane pass occupies residues 236-256; the sequence is LEGIIILGYLVLHTVFLAYGY. Residues 257 to 280 are Extracellular-facing; the sequence is EYDPENIIFKSRRVQVARYVADRS. The Ferric oxidoreductase domain occupies 280-414; the sequence is SGVLAFAHFP…SGIEWIYTAI (135 aa). The helical transmembrane segment at 281 to 301 threads the bilayer; sequence GVLAFAHFPLIVLFAGRNNFL. Topologically, residues 302 to 317 are cytoplasmic; that stretch reads EYISGVKYTSFIMFHK. His316 and His330 together coordinate heme. Residues 318–340 traverse the membrane as a helical segment; that stretch reads WLGRMMFLDAMIHGSAYTSYTVA. Asn341 is a glycosylation site (N-linked (GlcNAc...) asparagine). The Extracellular segment spans residues 341 to 353; it reads NKTWATSKNRLYW. Residues 354 to 374 form a helical membrane-spanning segment; sequence QFGVAALCLAGTMVFFSFAVF. The Cytoplasmic segment spans residues 375 to 377; it reads RKY. The chain crosses the membrane as a helical span at residues 378–398; it reads FYEAFLFLHIVLGAMFFYACW. Heme-binding residues include His386 and His400. Residues 399–400 lie on the Extracellular side of the membrane; sequence EH. A helical membrane pass occupies residues 401 to 423; the sequence is VVSLSGIEWIYTAIAIWIVDRII. The FAD-binding FR-type domain occupies 415 to 534; sequence AIWIVDRIIR…EGPYGSSSPV (120 aa). Topologically, residues 424–711 are cytoplasmic; the sequence is RIIKASYFGF…IEYFEEYQCW (288 aa). FAD is bound at residue 479-485; sequence HPFTVLD. NADP(+) contacts are provided by residues 526 to 529 and 677 to 678; these read GPYG and CG.

This sequence belongs to the ferric reductase (FRE) family. Requires FAD as cofactor. Heme serves as cofactor.

The protein localises to the cell membrane. The catalysed reaction is 2 a Fe(II)-siderophore + NADP(+) + H(+) = 2 a Fe(III)-siderophore + NADPH. Metalloreductase responsible for reducing extracellular iron and copper prior to import. Catalyzes the reductive uptake of Fe(3+)-salts and Fe(3+) bound to catecholate or hydroxamate siderophores. Fe(3+) is reduced to Fe(2+), which then dissociates from the siderophore and can be imported by the high-affinity Fe(2+) transport complex in the plasma membrane. Also participates in Cu(2+) reduction and Cu(+) uptake. The polypeptide is Ferric/cupric reductase transmembrane component 2 (FRE2) (Saccharomyces cerevisiae (strain ATCC 204508 / S288c) (Baker's yeast)).